The primary structure comprises 208 residues: MENHMKVVAFERQQQGTGASRRLRNAGKTTGIVYGGEAAPQMIELDHNALWHALKKEAFHSSILDLEVAGKSQRVLLRDVQYHPFRQLVLHVDFQRIDPKKKLHTKVPLHFLNAESSPAVKLSSAVVSHVVTEIEVECLPADLPEFLEVDLSKIEAGQSLHAKDIVLPNGVALTPHVDAENPVVASATIPAGAVSEEAAAGEGETPAA.

This sequence belongs to the bacterial ribosomal protein bL25 family. CTC subfamily. As to quaternary structure, part of the 50S ribosomal subunit; part of the 5S rRNA/L5/L18/L25 subcomplex. Contacts the 5S rRNA. Binds to the 5S rRNA independently of L5 and L18.

In terms of biological role, this is one of the proteins that binds to the 5S RNA in the ribosome where it forms part of the central protuberance. The polypeptide is Large ribosomal subunit protein bL25 (Burkholderia thailandensis (strain ATCC 700388 / DSM 13276 / CCUG 48851 / CIP 106301 / E264)).